A 324-amino-acid chain; its full sequence is Homoserine kinase (324 aa).

100–110 provides a ligand contact to ATP; that stretch reads PLSSGMGSSAA.

The protein belongs to the GHMP kinase family. Homoserine kinase subfamily.

It localises to the cytoplasm. The enzyme catalyses L-homoserine + ATP = O-phospho-L-homoserine + ADP + H(+). It participates in amino-acid biosynthesis; L-threonine biosynthesis; L-threonine from L-aspartate: step 4/5. In terms of biological role, catalyzes the ATP-dependent phosphorylation of L-homoserine to L-homoserine phosphate. The chain is Homoserine kinase from Chlorobaculum tepidum (strain ATCC 49652 / DSM 12025 / NBRC 103806 / TLS) (Chlorobium tepidum).